Here is a 1198-residue protein sequence, read N- to C-terminus: Fibronectin type-III domain-containing protein 3A (1198 aa).

Over residues 188–201 (KKLKDRQGTQKDKM) the composition is skewed to basic and acidic residues. The interval 188–257 (KKLKDRQGTQ…VDPEMEEKDE (70 aa)) is disordered. Residues Ser203, Ser207, and Ser213 each carry the phosphoserine modification. Fibronectin type-III domains follow at residues 268 to 369 (NIVK…TLSC), 373 to 465 (PPNA…TSGC), 469 to 562 (VPAS…TCPD), 566 to 660 (VPVK…TPAV), 664 to 757 (PCLP…TAPG), 761 to 851 (QCRP…TPPS), 863 to 950 (SDDD…TKPL), 951 to 1045 (PPDP…TPKS), and 1049 to 1151 (ALKA…TEPP). An N6-acetyllysine modification is found at Lys384. Residues 1177 to 1197 (ILVVFAFFSILIAFIIQYFVI) form a helical membrane-spanning segment.

Belongs to the FNDC3 family. In terms of tissue distribution, testis. Localizes to the acrosome of spermatids, as well as to Leydig cells. Can be detected on the acrosome beginning at steps 2-3 and continuing until step 12 of spermiogenesis.

Its subcellular location is the golgi apparatus membrane. In terms of biological role, mediates spermatid-Sertoli adhesion during spermatogenesis. The polypeptide is Fibronectin type-III domain-containing protein 3A (Fndc3a) (Mus musculus (Mouse)).